Consider the following 292-residue polypeptide: Inositol oxygenase (292 aa).

Substrate is bound by residues arginine 33 and 88–90 (DES). Fe cation contacts are provided by histidine 101, histidine 128, and aspartate 129. Residues lysine 132 and 149-150 (GD) contribute to the substrate site. 3 residues coordinate Fe cation: histidine 201, histidine 227, and aspartate 260. 227-228 (HS) serves as a coordination point for substrate.

Belongs to the myo-inositol oxygenase family. Fe cation is required as a cofactor.

It is found in the cytoplasm. The catalysed reaction is myo-inositol + O2 = D-glucuronate + H2O + H(+). It functions in the pathway polyol metabolism; myo-inositol degradation into D-glucuronate; D-glucuronate from myo-inositol: step 1/1. The chain is Inositol oxygenase (miox) from Dictyostelium discoideum (Social amoeba).